The chain runs to 540 residues: Mitochondrial distribution and morphology protein 34 (540 aa).

Residues 1-208 form the SMP-LTD domain; that stretch reads MSFKFNSGTF…LPSVIFNMSQ (208 aa). Disordered regions lie at residues 26-51 and 379-399; these read ALNP…KKPK and RSKS…SGSL. A compositionally biased stretch (polar residues) spans 35 to 44; sequence PESTSGQDGS.

Belongs to the MDM34 family. Component of the ER-mitochondria encounter structure (ERMES) or MDM complex, composed of MMM1, MDM10, MDM12 and MDM34.

Its subcellular location is the mitochondrion outer membrane. Component of the ERMES/MDM complex, which serves as a molecular tether to connect the endoplasmic reticulum (ER) and mitochondria. Components of this complex are involved in the control of mitochondrial shape and protein biogenesis, and function in nonvesicular lipid trafficking between the ER and mitochondria. MDM34 is required for the interaction of the ER-resident membrane protein MMM1 and the outer mitochondrial membrane-resident beta-barrel protein MDM10. In Kluyveromyces lactis (strain ATCC 8585 / CBS 2359 / DSM 70799 / NBRC 1267 / NRRL Y-1140 / WM37) (Yeast), this protein is Mitochondrial distribution and morphology protein 34.